The sequence spans 34 residues: uncharacterized protein (34 aa).

Residues 10–30 form a helical membrane-spanning segment; the sequence is LIITSSFFAIAVVLVLSVLLI.

It is found in the membrane. This is an uncharacterized protein from Shigella flexneri.